The following is a 358-amino-acid chain: Septin-12 (358 aa).

The tract at residues 1-25 is disordered; sequence MDPLRRSPSPCLSSQPSSPSTPPCE. Residues 6–18 are compositionally biased toward low complexity; sequence RSPSPCLSSQPSS. Positions 46 to 317 constitute a Septin-type G domain; the sequence is MGFEFNIMVV…ENYRVIRLNE (272 aa). Residues 46 to 319 are interaction with SEPTIN7; it reads MGFEFNIMVV…YRVIRLNESH (274 aa). Positions 56–63 are G1 motif; that stretch reads GQSGLGKS. Residues 56-63, Thr89, Gly115, 195-203, Gly251, and Arg266 each bind GTP; these read GQSGLGKS and RADSLTMEE. Residues 112 to 115 form a G3 motif region; sequence DTPG. The G4 motif stretch occupies residues 194–197; it reads ARAD. The segment at 258–358 is self-association (via N-terminus) to polymerize octameric septin 12-7-6-2/4-2/4-6-7-12 filaments; sequence VNGRCVLGRK…GAHDDSDDEF (101 aa).

Belongs to the TRAFAC class TrmE-Era-EngA-EngB-Septin-like GTPase superfamily. Septin GTPase family. In terms of assembly, septins polymerize into heterooligomeric protein complexes that form filaments, and can associate with cellular membranes, actin filaments and microtubules. GTPase activity is required for filament formation. Interacts with SEPTIN6 and SEPTIN11. Self-associates. Component of a septin core octameric complex consisting of SEPTIN12, SEPTIN7, SEPTIN6 and SEPTIN2 or SEPTIN4 in the order 12-7-6-2-2-6-7-12 or 12-7-6-4-4-6-7-12 and located in the sperm annulus; the octamer polymerizes into filaments via the SEPTIN12 N- and C-termini; the SEPTIN12:SEPTIN7 association is mediated by the respective GTP-binding domains. Interacts with SPAG4 and LMNB1. Associates with alpha- and beta-tubulins. Widely expressed. Expressed in lymph node.

Its subcellular location is the cytoplasm. It is found in the cytoskeleton. The protein resides in the spindle. The protein localises to the nucleus. It localises to the cell projection. Its subcellular location is the cilium. It is found in the flagellum. Functionally, filament-forming cytoskeletal GTPase. Involved in spermatogenesis. Involved in the morphogenesis of sperm heads and the elongation of sperm tails probably implicating the association with alpha- and beta-tubulins. Forms a filamentous structure with SEPTIN7, SEPTIN6, SEPTIN2 and probably SEPTIN4 at the sperm annulus which is required for the structural integrity and motility of the sperm tail during postmeiotic differentiation. May play a role in cytokinesis (Potential). This is Septin-12 from Homo sapiens (Human).